The following is a 152-amino-acid chain: Transcriptional regulator MraZ (152 aa).

SpoVT-AbrB domains lie at 5–52 (ATLV…PLPE) and 81–124 (ASEC…DETT).

This sequence belongs to the MraZ family. As to quaternary structure, forms oligomers.

It is found in the cytoplasm. Its subcellular location is the nucleoid. In terms of biological role, negatively regulates its own expression and that of the subsequent genes in the proximal part of the division and cell wall (dcw) gene cluster. Acts by binding directly to DNA. May also regulate the expression of genes outside the dcw cluster. The sequence is that of Transcriptional regulator MraZ from Shigella dysenteriae serotype 1 (strain Sd197).